The sequence spans 310 residues: tRNA-cytidine(32) 2-sulfurtransferase (310 aa).

Residues 48–53 (SGGKDS) carry the PP-loop motif motif. [4Fe-4S] cluster contacts are provided by Cys-123, Cys-126, and Cys-214.

This sequence belongs to the TtcA family. As to quaternary structure, homodimer. The cofactor is Mg(2+). Requires [4Fe-4S] cluster as cofactor.

The protein localises to the cytoplasm. It carries out the reaction cytidine(32) in tRNA + S-sulfanyl-L-cysteinyl-[cysteine desulfurase] + AH2 + ATP = 2-thiocytidine(32) in tRNA + L-cysteinyl-[cysteine desulfurase] + A + AMP + diphosphate + H(+). It functions in the pathway tRNA modification. Catalyzes the ATP-dependent 2-thiolation of cytidine in position 32 of tRNA, to form 2-thiocytidine (s(2)C32). The sulfur atoms are provided by the cysteine/cysteine desulfurase (IscS) system. This chain is tRNA-cytidine(32) 2-sulfurtransferase, found in Vibrio cholerae serotype O1 (strain ATCC 39315 / El Tor Inaba N16961).